The primary structure comprises 147 residues: Cytochrome c' (147 aa).

The signal sequence occupies residues 1–21 (MKRMMIVAALAALTTTTVAQA). Arg-31, Thr-87, Glu-88, Cys-137, Cys-140, and His-141 together coordinate heme c.

In terms of assembly, homodimer. Post-translationally, binds 1 heme c group covalently per subunit.

Functionally, cytochrome c' is the most widely occurring bacterial c-type cytochrome. Cytochromes c' are high-spin proteins and the heme has no sixth ligand. Their exact function is not known. In Rhodospirillum rubrum (strain ATCC 11170 / ATH 1.1.1 / DSM 467 / LMG 4362 / NCIMB 8255 / S1), this protein is Cytochrome c'.